We begin with the raw amino-acid sequence, 344 residues long: Acyl-CoA ligase clz12 (344 aa).

2 AMP-binding regions span residues Val2–Val239 and Glu248–Lys322.

This sequence belongs to the ATP-dependent AMP-binding enzyme family.

It participates in secondary metabolite biosynthesis. In terms of biological role, acyl-CoA ligase; part of the gene cluster that mediates the biosynthesis of squalestatin S1 (SQS1, also known as zaragozic acid A), a heavily oxidized fungal polyketide that offers potent cholesterol lowering activity by targeting squalene synthase (SS). SQS1 is composed of a 2,8-dioxobicyclic[3.2.1]octane-3,4,5-tricarboxyclic acid core that is connected to two lipophilic polyketide arms. These initial steps feature the priming of an unusual benzoic acid starter unit onto the highly reducing polyketide synthase clz14, followed by oxaloacetate extension and product release to generate a tricarboxylic acid containing product. The phenylalanine ammonia lyase (PAL) clz10 and the acyl-CoA ligase clz12 are involved in transforming phenylalanine into benzoyl-CoA. The citrate synthase-like protein clz17 is involved in connecting the C-alpha-carbons of the hexaketide chain and oxaloacetate to afford the tricarboxylic acid unit. The potential hydrolytic enzymes, clz11 and clz13, are in close proximity to pks2 and may participate in product release. On the other side, the tetraketide arm is synthesized by a the squalestatin tetraketide synthase clz2 and enzymatically esterified to the core in the last biosynthetic step, by the acetyltransferase clz6. The biosynthesis of the tetraketide must involve 3 rounds of chain extension. After the first and second rounds methyl-transfer occurs, and in all rounds of extension the ketoreductase and dehydratase are active. The enoyl reductase and C-MeT of clz2 are not active in the final round of extension. The acetyltransferase clz6 appears to have a broad substrate selectivity for its acyl CoA substrate, allowing the in vitro synthesis of novel squalestatins. The biosynthesis of SQS1 requires several oxidative steps likely performed by oxidoreductases clz3, clz15 and clz16. Finally, in support of the identification of the cluster as being responsible for SQS1 production, the cluster contains a gene encoding a putative squalene synthase (SS) clz20, suggesting a likely mechanism for self-resistance. In Cochliobolus lunatus (Filamentous fungus), this protein is Acyl-CoA ligase clz12.